The primary structure comprises 477 residues: Salivary plasminogen activator alpha 1 (477 aa).

Positions 1-36 are cleaved as a signal peptide; that stretch reads MVNTMKTKLLCVLLLCGAVFSLPRQETYRQLARGSR. Residues 40–82 form the Fibronectin type-I domain; that stretch reads VACKDEITQMTYRRQESWLRPEVRSKRVEHCQCDRGQARCHTV. 14 cysteine pairs are disulfide-bonded: C42/C72, C70/C79, C87/C98, C92/C109, C111/C120, C128/C209, C149/C191, C180/C204, C214/C345, C257/C273, C265/C334, C359/C434, C391/C407, and C424/C452. Residues 83–121 enclose the EGF-like domain; sequence PVNSCSEPRCFNGGTCWQAVYFSDFVCQCPAGYTGKRCE. One can recognise a Kringle domain in the interval 128-209; it reads CYEGQGVTYR…TSESCSVPVC (82 aa). N153 carries an N-linked (GlcNAc...) asparagine glycan. The region spanning 226–476 is the Peptidase S1 domain; it reads STGGLFTDIT…YLGWIRDNMH (251 aa). Residues H272 and D321 each act as charge relay system in the active site. N-linked (GlcNAc...) asparagine glycosylation occurs at N398. Catalysis depends on S428, which acts as the Charge relay system.

It belongs to the peptidase S1 family. In terms of assembly, monomer.

It is found in the secreted. The enzyme catalyses Specific cleavage of Arg-|-Val bond in plasminogen to form plasmin.. Its activity is regulated as follows. Activity toward plasminogen is stimulated in the presence of fibrin I. Its function is as follows. Probably essential to support the feeding habits of this exclusively haematophagous animal. Potent thrombolytic agent. This chain is Salivary plasminogen activator alpha 1, found in Desmodus rotundus (Vampire bat).